Consider the following 119-residue polypeptide: Secreted RxLR effector protein RXLR-C04 (119 aa).

An N-terminal signal peptide occupies residues 1 to 22 (MRLSYIFVVVATIITNCDIASA). The short motif at 40-77 (RILRQTNDSDDLEPIRHAMLDMELLEKIAKDPKYAEEV) is the RxLR-dEER element. An N-linked (GlcNAc...) asparagine glycan is attached at N46.

Belongs to the RxLR effector family.

It is found in the secreted. The protein resides in the host cytoplasm. It localises to the host nucleus. Its function is as follows. Secreted effector that suppresses pattern-triggered immunity (PTI) in plant host. In Plasmopara halstedii (Downy mildew of sunflower), this protein is Secreted RxLR effector protein RXLR-C04.